A 283-amino-acid chain; its full sequence is Bifunctional protein FolD 2 (283 aa).

Residues Gly165–Gly167, Thr192, and Val233 each bind NADP(+).

Belongs to the tetrahydrofolate dehydrogenase/cyclohydrolase family. Homodimer.

The catalysed reaction is (6R)-5,10-methylene-5,6,7,8-tetrahydrofolate + NADP(+) = (6R)-5,10-methenyltetrahydrofolate + NADPH. It catalyses the reaction (6R)-5,10-methenyltetrahydrofolate + H2O = (6R)-10-formyltetrahydrofolate + H(+). It functions in the pathway one-carbon metabolism; tetrahydrofolate interconversion. Catalyzes the oxidation of 5,10-methylenetetrahydrofolate to 5,10-methenyltetrahydrofolate and then the hydrolysis of 5,10-methenyltetrahydrofolate to 10-formyltetrahydrofolate. The sequence is that of Bifunctional protein FolD 2 from Saccharopolyspora erythraea (strain ATCC 11635 / DSM 40517 / JCM 4748 / NBRC 13426 / NCIMB 8594 / NRRL 2338).